Consider the following 259-residue polypeptide: tRNA (guanine-N(1)-)-methyltransferase (259 aa).

S-adenosyl-L-methionine-binding positions include glycine 113 and 133-138 (IGDYVL).

This sequence belongs to the RNA methyltransferase TrmD family. As to quaternary structure, homodimer.

Its subcellular location is the cytoplasm. It catalyses the reaction guanosine(37) in tRNA + S-adenosyl-L-methionine = N(1)-methylguanosine(37) in tRNA + S-adenosyl-L-homocysteine + H(+). In terms of biological role, specifically methylates guanosine-37 in various tRNAs. This chain is tRNA (guanine-N(1)-)-methyltransferase, found in Xanthomonas oryzae pv. oryzae (strain MAFF 311018).